The chain runs to 469 residues: tRNA-2-methylthio-N(6)-dimethylallyladenosine synthase (469 aa).

In terms of domain architecture, MTTase N-terminal spans 22 to 142; it reads RKVFIKTYGC…LPEALRRAKE (121 aa). Positions 31, 67, 105, 183, 187, and 190 each coordinate [4Fe-4S] cluster. Positions 169–401 constitute a Radical SAM core domain; it reads RARGVTAFLT…QALLLKQQQE (233 aa). In terms of domain architecture, TRAM spans 404 to 466; sequence ESCIGKEIDL…TNSLFAERAE (63 aa).

This sequence belongs to the methylthiotransferase family. MiaB subfamily. In terms of assembly, monomer. [4Fe-4S] cluster is required as a cofactor.

It localises to the cytoplasm. It catalyses the reaction N(6)-dimethylallyladenosine(37) in tRNA + (sulfur carrier)-SH + AH2 + 2 S-adenosyl-L-methionine = 2-methylsulfanyl-N(6)-dimethylallyladenosine(37) in tRNA + (sulfur carrier)-H + 5'-deoxyadenosine + L-methionine + A + S-adenosyl-L-homocysteine + 2 H(+). Catalyzes the methylthiolation of N6-(dimethylallyl)adenosine (i(6)A), leading to the formation of 2-methylthio-N6-(dimethylallyl)adenosine (ms(2)i(6)A) at position 37 in tRNAs that read codons beginning with uridine. This is tRNA-2-methylthio-N(6)-dimethylallyladenosine synthase from Rhizobium etli (strain ATCC 51251 / DSM 11541 / JCM 21823 / NBRC 15573 / CFN 42).